Reading from the N-terminus, the 42-residue chain is Thymosin beta-10 (42 aa).

Composition is skewed to basic and acidic residues over residues 1 to 25 (MADKPDMGEINSFDKAKLKKTETQE) and 33 to 42 (ETIEQEKQAK). The tract at residues 1-42 (MADKPDMGEINSFDKAKLKKTETQEKNTLPTKETIEQEKQAK) is disordered. Alanine 2 carries the post-translational modification N-acetylalanine. Residue lysine 4 is modified to N6-acetyllysine. Serine 12 is subject to Phosphoserine. Lysine 15 carries the post-translational modification N6-acetyllysine. Residues threonine 21, threonine 23, and threonine 34 each carry the phosphothreonine modification. Lysine 39 carries the N6-acetyllysine modification.

The protein belongs to the thymosin beta family.

It is found in the cytoplasm. It localises to the cytoskeleton. In terms of biological role, plays an important role in the organization of the cytoskeleton. Binds to and sequesters actin monomers (G actin) and therefore inhibits actin polymerization. This is Thymosin beta-10 (TMSB10) from Sus scrofa (Pig).